Reading from the N-terminus, the 444-residue chain is MTLDLSKPANAGYQSGFANEFATEALPGALPHGRNSPQRAPYGLYAEQLSGTAFTAPRGHNRRSWLYRIRPAAVHRPFEPYAGPQRLVSEFGDSADVPPTPPDQLRWDPLPMPVEPTDFVDGLVTMAGNGSAAAMNGCAIHLYAANRSMQDRFFYSADGELLIVPQQGRLFIATEFGRVEVEPFEIAVIPRGVRFSVTLPDGDARGYICENFGAQLRLPDLGPIGSNGLANPRDFLTPQAAYEDREGAFELIAKLNGRLWRADIGHSPLDVVAWHGNYAPYKYDLRLFNTIGSISFDHPDPSIFLVLQSQSDTPGVDTIDFVIFPPRWLAAEDTFRPPWFHRNVASEFMGLVHGAYDAKAEGFVPGGASLHNCMSGHGPDADTFEKASASDTTKPHKVDATMAFMFETRTLIRPTRYALDTAQLQADYFECWQGIKKHFNPEQR.

Catalysis depends on His298, which acts as the Proton acceptor. His341 and Glu347 together coordinate Fe cation. Homogentisate is bound by residues Tyr356 and His377. Fe cation is bound at residue His377.

Belongs to the homogentisate dioxygenase family. In terms of assembly, hexamer; dimer of trimers. Requires Fe cation as cofactor.

The enzyme catalyses homogentisate + O2 = 4-maleylacetoacetate + H(+). Its pathway is amino-acid degradation; L-phenylalanine degradation; acetoacetate and fumarate from L-phenylalanine: step 4/6. Functionally, involved in the catabolism of homogentisate (2,5-dihydroxyphenylacetate or 2,5-OH-PhAc), a central intermediate in the degradation of phenylalanine and tyrosine. Catalyzes the oxidative ring cleavage of the aromatic ring of homogentisate to yield maleylacetoacetate. The chain is Homogentisate 1,2-dioxygenase from Burkholderia lata (strain ATCC 17760 / DSM 23089 / LMG 22485 / NCIMB 9086 / R18194 / 383).